Here is a 193-residue protein sequence, read N- to C-terminus: V-type sodium ATPase subunit E (193 aa).

The protein belongs to the V-ATPase E subunit family. In terms of processing, the N-terminus is blocked.

In terms of biological role, involved in ATP-driven sodium extrusion. In Enterococcus hirae (strain ATCC 9790 / DSM 20160 / JCM 8729 / LMG 6399 / NBRC 3181 / NCIMB 6459 / NCDO 1258 / NCTC 12367 / WDCM 00089 / R), this protein is V-type sodium ATPase subunit E (ntpE).